The primary structure comprises 115 residues: Transcription initiation factor IIA subunit 2 (115 aa).

It belongs to the TFIIA subunit 2 family. TFIIA is a heterodimer of the large unprocessed subunit 1 and a small subunit gamma.

Its subcellular location is the nucleus. In terms of biological role, TFIIA is a component of the transcription machinery of RNA polymerase II and plays an important role in transcriptional activation. TFIIA in a complex with tbp mediates transcriptional activity. This is Transcription initiation factor IIA subunit 2 (gtf2a2) from Dictyostelium discoideum (Social amoeba).